The sequence spans 361 residues: Versatile peroxidase VPL2 (361 aa).

An N-terminal signal peptide occupies residues 1 to 22 (MSFKTLSALALALGAAVQFASA). A propeptide spanning residues 23 to 30 (AVPLVQKR) is cleaved from the precursor. 4 cysteine pairs are disulfide-bonded: cysteine 33/cysteine 45, cysteine 44/cysteine 308, cysteine 64/cysteine 144, and cysteine 272/cysteine 337. The Mn(2+) site is built by glutamate 66 and glutamate 70. The active-site Proton acceptor is the histidine 77. Residues aspartate 78, glycine 90, aspartate 92, and serine 94 each coordinate Ca(2+). An N-linked (GlcNAc...) asparagine glycan is attached at asparagine 126. Catalysis depends on tryptophan 194, which acts as the Tryptophan radical intermediate. Residue histidine 199 participates in heme b binding. Position 200 (serine 200) interacts with Ca(2+). 203–207 (AADKV) is a heme b binding site. Position 205 (aspartate 205) interacts with Mn(2+). Residues aspartate 217, threonine 219, valine 222, and aspartate 224 each coordinate Ca(2+).

It belongs to the peroxidase family. Ligninase subfamily. Requires heme b as cofactor. Ca(2+) serves as cofactor.

The protein localises to the secreted. It carries out the reaction 1-(4-hydroxy-3-methoxyphenyl)-2-(2-methoxyphenoxy)propane-1,3-diol + H2O2 = guaiacol + vanillin + glycolaldehyde + H2O. The enzyme catalyses 2 Mn(2+) + H2O2 + 2 H(+) = 2 Mn(3+) + 2 H2O. Functionally, a versatile ligninolytic peroxidase that combines the substrate specificity characteristics of the two other ligninolytic peroxidases, manganese peroxidase and lignin peroxidase. The chain is Versatile peroxidase VPL2 (vpl2) from Pleurotus eryngii (Boletus of the steppes).